We begin with the raw amino-acid sequence, 540 residues long: MDSQETKVFENVKQENPDEKKPKVEEPDSQNNASTQSQQKFLDFQLSWCPESERKTTKYHLLKFHSNKAIDPSKSFVPPIKMQRRDPNAPSSSNGEQNAEQGSSSNVNIASIAPYGGAQNMKQNAFKRKTRQVVKVDPQARRLQEEELSPWIMEDFEGKNTWVSTMEGGQSSAYVLFMFSENGFKVIPTDRFYRFNQRNNFQTLSIDEAEAKMNKKTPIPRWFMKKESEENLAEAGSASPMYKLKTVPNARPVTGPRASGSDDELDYDEEFADDEEAPIMEGNEEDNKKLKDKIKKEMLTANLFGEADQDVDLEEENDRQMSREGKKLQRYLKLLEKNLAYESDEEDEDPYASSHDASSEEEVLQEEEELQKREEKLKSRFSANASKTNTPRPLERTPSSVSPVKASSQLQSPNTSIQIRPQEQLINKPGYIILRLSSEKLSRFANDFPRMVPSMGSTETSVGDQVEVVGDTTNVPIDDSNLITEAEVMKALRAGPISIKDLVHLFQRKIRADNRNRLGIQKIIRKVARFENKLLVLKNY.

Residues 1–26 are compositionally biased toward basic and acidic residues; it reads MDSQETKVFENVKQENPDEKKPKVEE. Disordered regions lie at residues 1-39 and 70-106; these read MDSQ…QSQQ and IDPS…SSSN. Polar residues-rich tracts occupy residues 29 to 39 and 89 to 106; these read SQNNASTQSQQ and APSS…SSSN. Phosphoserine occurs at positions 259 and 261. Residues 280 to 382 are a coiled coil; sequence MEGNEEDNKK…REEKLKSRFS (103 aa). Residues 341-416 are disordered; it reads YESDEEDEDP…SSQLQSPNTS (76 aa). A compositionally biased stretch (acidic residues) spans 359 to 369; the sequence is SEEEVLQEEEE. Residues 381–416 show a composition bias toward polar residues; sequence FSANASKTNTPRPLERTPSSVSPVKASSQLQSPNTS. Ser-399 is modified (phosphoserine).

It belongs to the TFIIF alpha subunit family. Component of the fcp1/TFIIF/polII complex via interaction of tfg3 with both tfg1/TFIIF-alpha and tfg2/TFIIF-beta subunits.

The protein localises to the nucleus. Its function is as follows. TFIIF is a general transcription initiation factor that binds to RNA polymerase II and helps to recruit it to the initiation complex in collaboration with TFIIB. It promotes transcription elongation. The sequence is that of Transcription initiation factor IIF subunit alpha (tfg1) from Schizosaccharomyces pombe (strain 972 / ATCC 24843) (Fission yeast).